Consider the following 292-residue polypeptide: uncharacterized protein (292 aa).

NADP(+) contacts are provided by Leu17, Asp55, Asn82, and Lys115. The active-site Proton donor is Ser134. NADP(+) contacts are provided by Tyr148, Lys152, and Thr184. Residue Tyr148 is the Proton acceptor of the active site. Catalysis depends on Lys152, which acts as the Lowers pKa of active site Tyr.

It belongs to the short-chain dehydrogenases/reductases (SDR) family.

It localises to the cytoplasm. This is an uncharacterized protein from Schizosaccharomyces pombe (strain 972 / ATCC 24843) (Fission yeast).